A 127-amino-acid polypeptide reads, in one-letter code: Large ribosomal subunit protein bL20 (127 aa).

Belongs to the bacterial ribosomal protein bL20 family.

In terms of biological role, binds directly to 23S ribosomal RNA and is necessary for the in vitro assembly process of the 50S ribosomal subunit. It is not involved in the protein synthesizing functions of that subunit. The polypeptide is Large ribosomal subunit protein bL20 (Opitutus terrae (strain DSM 11246 / JCM 15787 / PB90-1)).